The chain runs to 304 residues: Small ribosomal subunit biogenesis GTPase RsgA (304 aa).

In terms of domain architecture, CP-type G spans 78–237 (VSFLTRPPVA…VADTPGFNRP (160 aa)). GTP is bound by residues 127-130 (TKTD) and 179-187 (GPSGVGKSS). Zn(2+) contacts are provided by C262, C267, H269, and C275.

The protein belongs to the TRAFAC class YlqF/YawG GTPase family. RsgA subfamily. In terms of assembly, monomer. Associates with 30S ribosomal subunit, binds 16S rRNA. Zn(2+) is required as a cofactor.

It is found in the cytoplasm. Its function is as follows. One of several proteins that assist in the late maturation steps of the functional core of the 30S ribosomal subunit. Helps release RbfA from mature subunits. May play a role in the assembly of ribosomal proteins into the subunit. Circularly permuted GTPase that catalyzes slow GTP hydrolysis, GTPase activity is stimulated by the 30S ribosomal subunit. In Synechococcus sp. (strain CC9311), this protein is Small ribosomal subunit biogenesis GTPase RsgA.